We begin with the raw amino-acid sequence, 479 residues long: Cell division protein FtsA (479 aa).

The tract at residues 417–458 (QGRQTERKENEQRDNTDRQREDTPKQTVKKKEKTGPSFGDKL) is disordered. Over residues 420–440 (QTERKENEQRDNTDRQREDTP) the composition is skewed to basic and acidic residues.

This sequence belongs to the FtsA/MreB family. Self-interacts. Interacts with FtsZ.

It is found in the cell inner membrane. In terms of biological role, cell division protein that is involved in the assembly of the Z ring. May serve as a membrane anchor for the Z ring. The protein is Cell division protein FtsA of Porphyromonas gingivalis (strain ATCC BAA-308 / W83).